Here is a 547-residue protein sequence, read N- to C-terminus: Leiomodin-2 (547 aa).

Residues 1–47 (MSTFGYRRGLSKYESIDEDELLASLSAEELKELERELEDIEPDRNLP) form an interaction with tropomyosin alpha region. 3 interaction with actin regions span residues 1–161 (MSTF…SDNS), 162–497 (KPKI…KEIK), and 521–540 (AHENLMEAIRGSSIKQLKRV). Phosphoserine occurs at positions 11, 15, and 24. Positions 16 to 41 (IDEDELLASLSAEELKELERELEDIE) form a coiled coil. 2 disordered regions span residues 91 to 162 (KVAE…DNSK) and 352 to 533 (MDKQ…RGSS). Composition is skewed to acidic residues over residues 95–104 (DKEESEEELI) and 112–139 (VSEEVYTEEEEEESQEEEEEEDSDEEER). Residues 113–148 (SEEVYTEEEEEESQEEEEEEDSDEEERTIETAKGIN) are a coiled coil. Residues 149–160 (GTVNYDSVNSDN) show a composition bias toward polar residues. A compositionally biased stretch (basic and acidic residues) spans 352–367 (MDKQRQKRLQEQKQQE). Residue serine 400 is modified to Phosphoserine. The span at 419–449 (ATPPPPPPPPPPPPPSSQRLPPPPPPPPPPL) shows a compositional bias: pro residues. The segment covering 465 to 475 (QQESAQRALQN) has biased composition (polar residues). The span at 477–487 (QKKKKGKKVKK) shows a compositional bias: basic residues. Basic and acidic residues predominate over residues 494-512 (KEIKNSLRSVQEKKMEDSS). One can recognise a WH2 domain in the interval 521-540 (AHENLMEAIRGSSIKQLKRV).

This sequence belongs to the tropomodulin family. Can bind at least three actin monomers and thereby provides a nucleus for actin filament formation. Interacts (via N-terminus) with tropomyosin alpha (TPM1) (via N-terminus). May also interact with TPM2 (via N-terminus). Interacts with FLII. Specifically expressed in heart and skeletal muscles, with higher levels in heart (at protein level). Not expressed in other tissues.

It is found in the cytoplasm. It localises to the myofibril. The protein localises to the sarcomere. Its subcellular location is the m line. The protein resides in the cytoskeleton. Functionally, mediates nucleation of actin filaments and thereby promotes actin polymerization. Plays a role in the regulation of actin filament length. Required for normal sarcomere organization in the heart, and for normal heart function. This is Leiomodin-2 (LMOD2) from Homo sapiens (Human).